We begin with the raw amino-acid sequence, 96 residues long: Small ribosomal subunit protein bS6 (96 aa).

It belongs to the bacterial ribosomal protein bS6 family.

In terms of biological role, binds together with bS18 to 16S ribosomal RNA. This Streptococcus gordonii (strain Challis / ATCC 35105 / BCRC 15272 / CH1 / DL1 / V288) protein is Small ribosomal subunit protein bS6.